Reading from the N-terminus, the 635-residue chain is Probable ethylene response sensor 2 (635 aa).

Helical transmembrane passes span 24–44, 59–79, and 94–114; these read ISDF…IYFV, FGAF…TFAI, and ATAV…PDLL. Cu cation-binding residues include Cys-66 and His-70. A GAF domain is found at 159 to 308; sequence DRHTILRTTL…VVADQVAVAL (150 aa). Positions 351-589 constitute a Histidine kinase domain; the sequence is VMNHEMRTPM…MFFVKLGMPE (239 aa). A Phosphohistidine; by autocatalysis modification is found at His-354.

Belongs to the ethylene receptor family. As to quaternary structure, homodimer. It depends on Cu cation as a cofactor. As to expression, expressed in anthers and hulls.

It localises to the endoplasmic reticulum membrane. It carries out the reaction ATP + protein L-histidine = ADP + protein N-phospho-L-histidine.. In terms of biological role, ethylene receptor related to bacterial two-component regulators. Acts as a negative regulator of ethylene signaling. May play a role in the regulation of flowering by up-regulating GI (GIGANTEA) and RCN1 and regulate starch accumulation by down-regulating the alpha-amylase AMY3D. The chain is Probable ethylene response sensor 2 from Oryza sativa subsp. indica (Rice).